Here is a 177-residue protein sequence, read N- to C-terminus: Transmembrane protein 190 (177 aa).

An N-terminal signal peptide occupies residues 1–21 (MLGCGIPALGLLLLLQGSADG). Residues 22 to 81 (NGIQGFFYPWSCEGDIWDRESCGGQAAIDSPNLCLRLRCCYRNGVCYHQRPDENVRRKHM) lie on the Extracellular side of the membrane. Residues 31 to 71 (WSCEGDIWDRESCGGQAAIDSPNLCLRLRCCYRNGVCYHQR) form the P-type domain. Intrachain disulfides connect cysteine 33–cysteine 61, cysteine 43–cysteine 60, and cysteine 55–cysteine 67. The chain crosses the membrane as a helical span at residues 82 to 102 (WALVWTCSGLLLLSCSICLFW). The Cytoplasmic segment spans residues 103 to 177 (WAKRRDVLHM…EETEGEEEED (75 aa)). The disordered stretch occupies residues 131 to 177 (KHRGTKKTPSTGSVPVALSKESRDVEGGTEGEGTEEGEETEGEEEED). The span at 157–177 (GGTEGEGTEEGEETEGEEEED) shows a compositional bias: acidic residues.

It is found in the membrane. The chain is Transmembrane protein 190 (TMEM190) from Homo sapiens (Human).